Here is a 493-residue protein sequence, read N- to C-terminus: UDP-N-acetylmuramoyl-L-alanyl-D-glutamate--L-lysine ligase (493 aa).

Ser-30 contacts UDP-N-acetyl-alpha-D-muramoyl-L-alanyl-D-glutamate. 110 to 116 contacts ATP; the sequence is GTNGKTS. UDP-N-acetyl-alpha-D-muramoyl-L-alanyl-D-glutamate is bound by residues Asn-151, 152–153, Ser-179, and Arg-187; that span reads TT. Lys-219 carries the N6-carboxylysine modification. Positions 406-409 match the L-lysine recognition motif motif; that stretch reads DNPA.

This sequence belongs to the MurCDEF family. MurE subfamily. The cofactor is Mg(2+). In terms of processing, carboxylation is probably crucial for Mg(2+) binding and, consequently, for the gamma-phosphate positioning of ATP.

It localises to the cytoplasm. The catalysed reaction is UDP-N-acetyl-alpha-D-muramoyl-L-alanyl-D-glutamate + L-lysine + ATP = UDP-N-acetyl-alpha-D-muramoyl-L-alanyl-gamma-D-glutamyl-L-lysine + ADP + phosphate + H(+). It functions in the pathway cell wall biogenesis; peptidoglycan biosynthesis. In terms of biological role, catalyzes the addition of L-lysine to the nucleotide precursor UDP-N-acetylmuramoyl-L-alanyl-D-glutamate (UMAG) in the biosynthesis of bacterial cell-wall peptidoglycan. Cannot use diaminopimelate as substrate. Can accept L-ornithine as substrate, but the efficiency is 400-fold lower than that with L-lysine. Seems to have a role in beta-lactam antibiotic resistance. This is UDP-N-acetylmuramoyl-L-alanyl-D-glutamate--L-lysine ligase from Staphylococcus aureus (strain NCTC 8325 / PS 47).